Here is a 352-residue protein sequence, read N- to C-terminus: Alanine racemase (352 aa).

Lys-33 functions as the Proton acceptor; specific for D-alanine in the catalytic mechanism. The residue at position 33 (Lys-33) is an N6-(pyridoxal phosphate)lysine. Residue Arg-129 participates in substrate binding. The active-site Proton acceptor; specific for L-alanine is Tyr-250. Met-298 is a binding site for substrate.

Belongs to the alanine racemase family. It depends on pyridoxal 5'-phosphate as a cofactor.

The enzyme catalyses L-alanine = D-alanine. It participates in amino-acid biosynthesis; D-alanine biosynthesis; D-alanine from L-alanine: step 1/1. Functionally, catalyzes the interconversion of L-alanine and D-alanine. May also act on other amino acids. This is Alanine racemase (alr) from Neisseria meningitidis serogroup C / serotype 2a (strain ATCC 700532 / DSM 15464 / FAM18).